The following is a 283-amino-acid chain: Cytosolic Fe-S cluster assembly factor CFD1 (283 aa).

Position 26–33 (26–33 (GKGGVGKS)) interacts with ATP. Cysteine 202 and cysteine 205 together coordinate [4Fe-4S] cluster.

The protein belongs to the Mrp/NBP35 ATP-binding proteins family. NUBP2/CFD1 subfamily. As to quaternary structure, heterotetramer of 2 NBP35 and 2 CFD1 chains. The cofactor is [4Fe-4S] cluster.

Its subcellular location is the cytoplasm. Functionally, component of the cytosolic iron-sulfur (Fe/S) protein assembly (CIA) machinery. Required for maturation of extramitochondrial Fe-S proteins. The NBP35-CFD1 heterotetramer forms a Fe-S scaffold complex, mediating the de novo assembly of an Fe-S cluster and its transfer to target apoproteins. Required for biogenesis and export of both ribosomal subunits, which may reflect a role in assembly of the Fe/S clusters in RLI1, a protein which performs rRNA processing and ribosome export. The polypeptide is Cytosolic Fe-S cluster assembly factor CFD1 (Kluyveromyces lactis (strain ATCC 8585 / CBS 2359 / DSM 70799 / NBRC 1267 / NRRL Y-1140 / WM37) (Yeast)).